The chain runs to 285 residues: 4-diphosphocytidyl-2-C-methyl-D-erythritol kinase (285 aa).

K10 is a catalytic residue. 94 to 104 (PVAAGLGGGSS) lines the ATP pocket. Residue D136 is part of the active site.

Belongs to the GHMP kinase family. IspE subfamily.

The catalysed reaction is 4-CDP-2-C-methyl-D-erythritol + ATP = 4-CDP-2-C-methyl-D-erythritol 2-phosphate + ADP + H(+). The protein operates within isoprenoid biosynthesis; isopentenyl diphosphate biosynthesis via DXP pathway; isopentenyl diphosphate from 1-deoxy-D-xylulose 5-phosphate: step 3/6. Its function is as follows. Catalyzes the phosphorylation of the position 2 hydroxy group of 4-diphosphocytidyl-2C-methyl-D-erythritol. The chain is 4-diphosphocytidyl-2-C-methyl-D-erythritol kinase from Latilactobacillus sakei subsp. sakei (strain 23K) (Lactobacillus sakei subsp. sakei).